We begin with the raw amino-acid sequence, 109 residues long: Fluoride-specific ion channel FluC 1 (109 aa).

Transmembrane regions (helical) follow at residues 1 to 21 (MVIVYLAIACGFGALVRYFFS), 29 to 49 (LPLGTLIANLLGCFLIGVFYN), 55 to 75 (EVYAILATGFCGGLTTFSTLN), and 87 to 107 (VFYSYLILTYLGGLVAIFLGI). Residues Gly66 and Thr69 each contribute to the Na(+) site.

The protein belongs to the fluoride channel Fluc/FEX (TC 1.A.43) family.

Its subcellular location is the cell membrane. The enzyme catalyses fluoride(in) = fluoride(out). Na(+) is not transported, but it plays an essential structural role and its presence is essential for fluoride channel function. Fluoride-specific ion channel. Important for reducing fluoride concentration in the cell, thus reducing its toxicity. This is Fluoride-specific ion channel FluC 1 from Streptococcus pneumoniae (strain ATCC BAA-255 / R6).